A 406-amino-acid chain; its full sequence is 12S rRNA N(4)-cytidine methyltransferase METTL15 (406 aa).

The N-terminal 22 residues, 1–22, are a transit peptide targeting the mitochondrion; the sequence is MLRYPYFYRTYNRLFSHFVDSG. Residues 100-102, aspartate 119, phenylalanine 146, aspartate 169, and glutamine 176 each bind S-adenosyl-L-methionine; that span reads GGH. A Phosphoserine modification is found at serine 358.

It belongs to the methyltransferase superfamily. RsmH family.

The protein resides in the mitochondrion matrix. The enzyme catalyses cytidine(839) in 12S rRNA + S-adenosyl-L-methionine = N(4)-methylcytidine(839) in 12S rRNA + S-adenosyl-L-homocysteine + H(+). In terms of biological role, N4-methylcytidine (m4C) methyltransferase responsible for the methylation of position C839 in mitochondrial 12S rRNA. Involved in the stabilization of 12S rRNA folding, therefore facilitating the assembly of the mitochondrial small ribosomal subunits. This Mus musculus (Mouse) protein is 12S rRNA N(4)-cytidine methyltransferase METTL15.